A 238-amino-acid chain; its full sequence is Survival of motor neuron-related-splicing factor 30 (238 aa).

Residues Ser72–Lys132 enclose the Tudor domain. The Nuclear localization signal motif lies at Lys142–Lys160.

The protein belongs to the SMN family. As to quaternary structure, associates with spliceosomes.

It is found in the nucleus speckle. The protein localises to the nucleus. Its subcellular location is the cajal body. Functionally, involved in spliceosome assembly. The protein is Survival of motor neuron-related-splicing factor 30 (smndc1) of Xenopus tropicalis (Western clawed frog).